The chain runs to 475 residues: GlcNAc-binding protein A (475 aa).

The first 27 residues, 1–27 (MPKLTQLSLVTLALTAGSTLVSQTASA), serve as a signal peptide directing secretion. Residues 28–195 (HGYVVSPESR…SFYNAIDVNF (168 aa)) form the Chitin-binding type-4 domain. A Chitin-binding type-3 domain is found at 426-468 (AGTKVLQPKTGKVYQCKPWPYNGYCVQWSPTATGFEPGIGNSW).

It belongs to the GbpA family.

Its subcellular location is the secreted. Functionally, probably interacts with GlcNAc residues. May promote attachment to both epithelial cell surfaces and chitin. The protein is GlcNAc-binding protein A of Shewanella oneidensis (strain ATCC 700550 / JCM 31522 / CIP 106686 / LMG 19005 / NCIMB 14063 / MR-1).